Reading from the N-terminus, the 171-residue chain is S-ribosylhomocysteine lyase (171 aa).

His-54, His-58, and Cys-128 together coordinate Fe cation.

It belongs to the LuxS family. Homodimer. The cofactor is Fe cation.

The enzyme catalyses S-(5-deoxy-D-ribos-5-yl)-L-homocysteine = (S)-4,5-dihydroxypentane-2,3-dione + L-homocysteine. Its function is as follows. Involved in the synthesis of autoinducer 2 (AI-2) which is secreted by bacteria and is used to communicate both the cell density and the metabolic potential of the environment. The regulation of gene expression in response to changes in cell density is called quorum sensing. Catalyzes the transformation of S-ribosylhomocysteine (RHC) to homocysteine (HC) and 4,5-dihydroxy-2,3-pentadione (DPD). The polypeptide is S-ribosylhomocysteine lyase (Campylobacter curvus (strain 525.92)).